Here is a 351-residue protein sequence, read N- to C-terminus: Alcohol dehydrogenase 2 (351 aa).

7 residues coordinate Zn(2+): cysteine 47, histidine 70, cysteine 101, cysteine 104, cysteine 107, cysteine 115, and cysteine 157. Residues 181-187 (GAGGGLG), aspartate 205, lysine 209, 271-273 (VGL), and arginine 343 contribute to the NAD(+) site.

It belongs to the zinc-containing alcohol dehydrogenase family. In terms of assembly, homotetramer. Zn(2+) is required as a cofactor.

The enzyme catalyses a primary alcohol + NAD(+) = an aldehyde + NADH + H(+). It carries out the reaction a secondary alcohol + NAD(+) = a ketone + NADH + H(+). The protein is Alcohol dehydrogenase 2 (sodh-2) of Caenorhabditis elegans.